The following is a 68-amino-acid chain: Protein transport protein Sec61 subunit gamma (68 aa).

An N-acetylmethionine modification is found at methionine 1. Topologically, residues 1–32 (MDQVMQFVEPSRQFVKDSIRLVKRCTKPDRKE) are cytoplasmic. Position 18 is a phosphoserine (serine 18). Residues 33–61 (FQKIAMATAIGFAIMGFIGFFVKLIHIPI) traverse the membrane as a helical segment. The Extracellular portion of the chain corresponds to 62–68 (NNIIVGG).

The protein belongs to the SecE/SEC61-gamma family. In terms of assembly, the SEC61 channel-forming translocon complex consists of channel-forming core components SEC61A1, SEC61B and SEC61G and different auxiliary components such as SEC62 and SEC63. The SEC61 channel associates with the multi-pass translocon (MPT) complex.

It localises to the endoplasmic reticulum membrane. Its function is as follows. Component of SEC61 channel-forming translocon complex that mediates transport of signal peptide-containing precursor polypeptides across the endoplasmic reticulum (ER). Forms a ribosome receptor and a gated pore in the ER membrane, both functions required for cotranslational translocation of nascent polypeptides. The SEC61 channel is also involved in ER membrane insertion of transmembrane proteins: it mediates membrane insertion of the first few transmembrane segments of proteins, while insertion of subsequent transmembrane regions of multi-pass membrane proteins is mediated by the multi-pass translocon (MPT) complex. The SEC61 channel cooperates with the translocating protein TRAM1 to import nascent proteins into the ER. The polypeptide is Protein transport protein Sec61 subunit gamma (SEC61G) (Bos taurus (Bovine)).